Reading from the N-terminus, the 631-residue chain is DDB1- and CUL4-associated factor 8-like protein 2 (631 aa).

Disordered stretches follow at residues 1–91 (MSHQ…EDFE) and 108–163 (EEET…HEQY). Positions 44 to 54 (SELSVTVTGDG) are enriched in polar residues. Acidic residues-rich tracts occupy residues 77–88 (SASEDIELESLE) and 108–147 (EEET…EEEE). 7 WD repeats span residues 226–265 (DHVG…PVLN), 269–310 (GHTN…YFNN), 316–356 (QHRG…PASK), 364–404 (DKKV…KKEN), 420–459 (DFPT…GAQY), 467–507 (RNNT…IIQF), and 511–550 (SREG…ATEL). Residues 594 to 631 (QDWRSGEAEFPDEESDESSSTSETSEEEVQDRVQCMPS) form a disordered region.

This sequence belongs to the WD repeat DCAF8 family.

The sequence is that of DDB1- and CUL4-associated factor 8-like protein 2 (DCAF8L2) from Homo sapiens (Human).